A 429-amino-acid chain; its full sequence is Enolase (429 aa).

Residue glutamine 167 participates in (2R)-2-phosphoglycerate binding. The Proton donor role is filled by glutamate 209. Residues aspartate 246, glutamate 289, and aspartate 316 each contribute to the Mg(2+) site. (2R)-2-phosphoglycerate-binding residues include lysine 341, arginine 370, serine 371, and lysine 392. The Proton acceptor role is filled by lysine 341.

It belongs to the enolase family. As to quaternary structure, component of the RNA degradosome, a multiprotein complex involved in RNA processing and mRNA degradation. The cofactor is Mg(2+).

It localises to the cytoplasm. Its subcellular location is the secreted. It is found in the cell surface. It carries out the reaction (2R)-2-phosphoglycerate = phosphoenolpyruvate + H2O. Its pathway is carbohydrate degradation; glycolysis; pyruvate from D-glyceraldehyde 3-phosphate: step 4/5. In terms of biological role, catalyzes the reversible conversion of 2-phosphoglycerate (2-PG) into phosphoenolpyruvate (PEP). It is essential for the degradation of carbohydrates via glycolysis. The sequence is that of Enolase from Pseudomonas fluorescens (strain ATCC BAA-477 / NRRL B-23932 / Pf-5).